A 985-amino-acid chain; its full sequence is Coiled-coil domain-containing protein 33 (985 aa).

Positions 228 to 263 are disordered; it reads MSPFSTDSDQEGLSWEAGPWQHPAQVPEEPQGRLDT. Positions 263 to 398 constitute a C2 domain; that stretch reads TSQDPYPAAN…VFLRGVNEPL (136 aa). Positions 599 to 745 form a coiled coil; the sequence is VEMNNYRRAM…LEERLCERKE (147 aa). The disordered stretch occupies residues 821-842; that stretch reads AERLQDTNGPGHPKSTETLPAQ. Residues 885–928 are a coiled coil; sequence DKFNLLAKLEQAQSRILSLENQLEESARHWAREKQNLAIRLQEQ. The segment at 931 to 985 is disordered; sequence GFGQPPNSIIIDQPNAGASKNPQQLSKLEPSLPSSDKKLNRPSDSQIEISNNQKT. Polar residues-rich tracts occupy residues 946–956 and 972–985; these read AGASKNPQQLS and PSDS…NQKT.

The polypeptide is Coiled-coil domain-containing protein 33 (Ccdc33) (Mus musculus (Mouse)).